Consider the following 190-residue polypeptide: Cytoplasmic envelopment protein 3 (190 aa).

G2 is lipidated: N-myristoyl glycine; by host. The tract at residues 14–190 (GTTSGEPLKD…TKKPAASLPF (177 aa)) is disordered. The span at 30–43 (SLRSYDNIPPTSSS) shows a compositional bias: polar residues. The segment covering 44–58 (DEGEDDDDGEDDDNE) has biased composition (acidic residues). A compositionally biased stretch (basic and acidic residues) spans 80–90 (SHREATHDGPK). Over residues 108-123 (KQSKKKKKPSKHHHHQ) the composition is skewed to basic residues. The segment covering 130–139 (ETDDLDEEDT) has biased composition (acidic residues).

Belongs to the herpesviridae cytoplasmic envelopment protein 3 family. As to quaternary structure, interacts with cytoplasmic envelopment protein 2; this interaction is essential for the proper localization of each protein to the assembly complex and thus for the production of infectious virus. Post-translationally, myristoylation and palmitoylation (probably on one or more of the nearby cysteines at the N-terminus) enable membrane-binding and Golgi apparatus-specific targeting and are essential for efficient packaging. In terms of processing, phosphorylated. Phosphorylation does not seem to be required for recycling to the host Golgi apparatus. Packaging is selective for underphosphorylated forms.

The protein resides in the virion tegument. It localises to the virion membrane. The protein localises to the host cell membrane. It is found in the host Golgi apparatus membrane. In terms of biological role, plays an important role in the cytoplasmic envelopment of tegument proteins and capsids during the assembly and egress processes. Also participates in viral entry at the fusion step probably by regulating the core fusion machinery. In Human cytomegalovirus (strain Merlin) (HHV-5), this protein is Cytoplasmic envelopment protein 3 (UL99).